The primary structure comprises 310 residues: Protein-L-isoaspartate O-methyltransferase (310 aa).

Disordered regions lie at residues 1-44 and 67-88; these read MSGE…DKPA and AKPATAPKPTAPKPALPKPAAP. Basic and acidic residues predominate over residues 14-29; it reads EDLKRAPRKSEGRPGE. Residues 32–44 are compositionally biased toward low complexity; sequence AAGAVPKAADKPA. Positions 75 to 86 are enriched in pro residues; that stretch reads PTAPKPALPKPA. The active site involves serine 157.

This sequence belongs to the methyltransferase superfamily. L-isoaspartyl/D-aspartyl protein methyltransferase family.

The protein resides in the cytoplasm. It carries out the reaction [protein]-L-isoaspartate + S-adenosyl-L-methionine = [protein]-L-isoaspartate alpha-methyl ester + S-adenosyl-L-homocysteine. Functionally, catalyzes the methyl esterification of L-isoaspartyl residues in peptides and proteins that result from spontaneous decomposition of normal L-aspartyl and L-asparaginyl residues. It plays a role in the repair and/or degradation of damaged proteins. The polypeptide is Protein-L-isoaspartate O-methyltransferase (Burkholderia orbicola (strain MC0-3)).